The following is a 202-amino-acid chain: ATP-dependent Clp protease proteolytic subunit (202 aa).

Residue Ser-106 is the Nucleophile of the active site. Residue His-131 is part of the active site.

It belongs to the peptidase S14 family. As to quaternary structure, fourteen ClpP subunits assemble into 2 heptameric rings which stack back to back to give a disk-like structure with a central cavity, resembling the structure of eukaryotic proteasomes.

It is found in the cytoplasm. It carries out the reaction Hydrolysis of proteins to small peptides in the presence of ATP and magnesium. alpha-casein is the usual test substrate. In the absence of ATP, only oligopeptides shorter than five residues are hydrolyzed (such as succinyl-Leu-Tyr-|-NHMec, and Leu-Tyr-Leu-|-Tyr-Trp, in which cleavage of the -Tyr-|-Leu- and -Tyr-|-Trp bonds also occurs).. In terms of biological role, cleaves peptides in various proteins in a process that requires ATP hydrolysis. Has a chymotrypsin-like activity. Plays a major role in the degradation of misfolded proteins. The protein is ATP-dependent Clp protease proteolytic subunit of Shewanella sp. (strain MR-7).